The primary structure comprises 371 residues: Aspartate-semialdehyde dehydrogenase (371 aa).

NADP(+) contacts are provided by residues 11-14 (RGMV), 38-39 (TS), and glutamine 75. Position 104 (arginine 104) interacts with phosphate. Catalysis depends on cysteine 137, which acts as the Acyl-thioester intermediate. Glutamine 164 serves as a coordination point for substrate. Residue 167–168 (SG) coordinates NADP(+). A substrate-binding site is contributed by glutamate 243. Lysine 246 lines the phosphate pocket. A substrate-binding site is contributed by arginine 269. Histidine 276 functions as the Proton acceptor in the catalytic mechanism. An NADP(+)-binding site is contributed by glutamine 352.

The protein belongs to the aspartate-semialdehyde dehydrogenase family. Homodimer.

The catalysed reaction is L-aspartate 4-semialdehyde + phosphate + NADP(+) = 4-phospho-L-aspartate + NADPH + H(+). It functions in the pathway amino-acid biosynthesis; L-lysine biosynthesis via DAP pathway; (S)-tetrahydrodipicolinate from L-aspartate: step 2/4. Its pathway is amino-acid biosynthesis; L-methionine biosynthesis via de novo pathway; L-homoserine from L-aspartate: step 2/3. The protein operates within amino-acid biosynthesis; L-threonine biosynthesis; L-threonine from L-aspartate: step 2/5. In terms of biological role, catalyzes the NADPH-dependent formation of L-aspartate-semialdehyde (L-ASA) by the reductive dephosphorylation of L-aspartyl-4-phosphate. This chain is Aspartate-semialdehyde dehydrogenase, found in Buchnera aphidicola subsp. Acyrthosiphon pisum (strain APS) (Acyrthosiphon pisum symbiotic bacterium).